Here is a 547-residue protein sequence, read N- to C-terminus: Chaperonin GroEL (547 aa).

ATP is bound by residues 30–33 (TLGP), K51, 87–91 (DGTTT), G415, and D496.

Belongs to the chaperonin (HSP60) family. As to quaternary structure, forms a cylinder of 14 subunits composed of two heptameric rings stacked back-to-back. Interacts with the co-chaperonin GroES.

It is found in the cytoplasm. It carries out the reaction ATP + H2O + a folded polypeptide = ADP + phosphate + an unfolded polypeptide.. Functionally, together with its co-chaperonin GroES, plays an essential role in assisting protein folding. The GroEL-GroES system forms a nano-cage that allows encapsulation of the non-native substrate proteins and provides a physical environment optimized to promote and accelerate protein folding. This chain is Chaperonin GroEL, found in Chlorobaculum parvum (strain DSM 263 / NCIMB 8327) (Chlorobium vibrioforme subsp. thiosulfatophilum).